Reading from the N-terminus, the 144-residue chain is MLVPKRVKHRREFRGKMRGAAKGGKEVTFGEFGLQALESSWITNRQIEAARVAMTRYMKRGGKVWIKIFPHKSYTAKGVGVRMGSGKGAPAGWVAVVKREKIMFEIGGVSEEVAREALRLASHKLPVKTKIVKREEVGGESNEG.

This sequence belongs to the universal ribosomal protein uL16 family. Part of the 50S ribosomal subunit.

Functionally, binds 23S rRNA and is also seen to make contacts with the A and possibly P site tRNAs. This chain is Large ribosomal subunit protein uL16, found in Latilactobacillus sakei subsp. sakei (strain 23K) (Lactobacillus sakei subsp. sakei).